Reading from the N-terminus, the 211-residue chain is Dephospho-CoA kinase (211 aa).

One can recognise a DPCK domain in the interval 2–204 (IIGLTGSIGM…SGVRRWRRGK (203 aa)). 10-15 (GMGKST) is a binding site for ATP.

It belongs to the CoaE family.

It is found in the cytoplasm. It catalyses the reaction 3'-dephospho-CoA + ATP = ADP + CoA + H(+). The protein operates within cofactor biosynthesis; coenzyme A biosynthesis; CoA from (R)-pantothenate: step 5/5. Catalyzes the phosphorylation of the 3'-hydroxyl group of dephosphocoenzyme A to form coenzyme A. This Rhodospirillum rubrum (strain ATCC 11170 / ATH 1.1.1 / DSM 467 / LMG 4362 / NCIMB 8255 / S1) protein is Dephospho-CoA kinase.